We begin with the raw amino-acid sequence, 406 residues long: UPF0754 membrane protein SYNPCC7002_A1087 (406 aa).

A helical transmembrane segment spans residues 384-404 (IVNLGGVLGFLVGVAQSVILL).

The protein belongs to the UPF0754 family.

It is found in the cell inner membrane. The polypeptide is UPF0754 membrane protein SYNPCC7002_A1087 (Picosynechococcus sp. (strain ATCC 27264 / PCC 7002 / PR-6) (Agmenellum quadruplicatum)).